The chain runs to 500 residues: Lysine--tRNA ligase (500 aa).

Mg(2+) is bound by residues E410 and E417.

The protein belongs to the class-II aminoacyl-tRNA synthetase family. Homodimer. Mg(2+) is required as a cofactor.

It localises to the cytoplasm. The catalysed reaction is tRNA(Lys) + L-lysine + ATP = L-lysyl-tRNA(Lys) + AMP + diphosphate. The chain is Lysine--tRNA ligase from Pseudomonas putida (strain ATCC 47054 / DSM 6125 / CFBP 8728 / NCIMB 11950 / KT2440).